The sequence spans 185 residues: Ribosome-recycling factor (185 aa).

Belongs to the RRF family.

Its subcellular location is the cytoplasm. Responsible for the release of ribosomes from messenger RNA at the termination of protein biosynthesis. May increase the efficiency of translation by recycling ribosomes from one round of translation to another. The protein is Ribosome-recycling factor of Shewanella sediminis (strain HAW-EB3).